The primary structure comprises 488 residues: Signal recognition particle receptor FtsY (488 aa).

A disordered region spans residues 14-82; the sequence is DTAPEDVSKP…AVPDDAVHGG (69 aa). A compositionally biased stretch (low complexity) spans 32–67; that stretch reads VGTSSTGSPVGTGAAMPAAQDAPSPAAPHAIATPDD. GTP is bound by residues 287-294, 369-373, and 433-436; these read GVNGVGKT, DTAGR, and TKLD.

Belongs to the GTP-binding SRP family. FtsY subfamily. In terms of assembly, part of the signal recognition particle protein translocation system, which is composed of SRP and FtsY. SRP is a ribonucleoprotein composed of Ffh and a 4.5S RNA molecule.

The protein resides in the cell inner membrane. Its subcellular location is the cytoplasm. The catalysed reaction is GTP + H2O = GDP + phosphate + H(+). Its function is as follows. Involved in targeting and insertion of nascent membrane proteins into the cytoplasmic membrane. Acts as a receptor for the complex formed by the signal recognition particle (SRP) and the ribosome-nascent chain (RNC). Interaction with SRP-RNC leads to the transfer of the RNC complex to the Sec translocase for insertion into the membrane, the hydrolysis of GTP by both Ffh and FtsY, and the dissociation of the SRP-FtsY complex into the individual components. The chain is Signal recognition particle receptor FtsY from Nitratidesulfovibrio vulgaris (strain ATCC 29579 / DSM 644 / CCUG 34227 / NCIMB 8303 / VKM B-1760 / Hildenborough) (Desulfovibrio vulgaris).